A 64-amino-acid polypeptide reads, in one-letter code: Large ribosomal subunit protein bL35 (64 aa).

This sequence belongs to the bacterial ribosomal protein bL35 family.

In Leifsonia xyli subsp. xyli (strain CTCB07), this protein is Large ribosomal subunit protein bL35.